The primary structure comprises 360 residues: Histidinol-phosphate aminotransferase (360 aa).

Position 218 is an N6-(pyridoxal phosphate)lysine (Lys-218).

This sequence belongs to the class-II pyridoxal-phosphate-dependent aminotransferase family. Histidinol-phosphate aminotransferase subfamily. Homodimer. It depends on pyridoxal 5'-phosphate as a cofactor.

It carries out the reaction L-histidinol phosphate + 2-oxoglutarate = 3-(imidazol-4-yl)-2-oxopropyl phosphate + L-glutamate. It functions in the pathway amino-acid biosynthesis; L-histidine biosynthesis; L-histidine from 5-phospho-alpha-D-ribose 1-diphosphate: step 7/9. In Chlorobium phaeobacteroides (strain DSM 266 / SMG 266 / 2430), this protein is Histidinol-phosphate aminotransferase.